A 227-amino-acid polypeptide reads, in one-letter code: Uracil-DNA glycosylase (227 aa).

Asp-64 functions as the Proton acceptor in the catalytic mechanism.

Belongs to the uracil-DNA glycosylase (UDG) superfamily. UNG family.

The protein localises to the cytoplasm. It carries out the reaction Hydrolyzes single-stranded DNA or mismatched double-stranded DNA and polynucleotides, releasing free uracil.. Functionally, excises uracil residues from the DNA which can arise as a result of misincorporation of dUMP residues by DNA polymerase or due to deamination of cytosine. The protein is Uracil-DNA glycosylase of Erwinia tasmaniensis (strain DSM 17950 / CFBP 7177 / CIP 109463 / NCPPB 4357 / Et1/99).